We begin with the raw amino-acid sequence, 68 residues long: Large ribosomal subunit protein uL29 (68 aa).

Residues 32–68 (QDQLKRRTGSLDNPAERTQHRRDLARVLTVLTQKTKA) are disordered. The span at 45-56 (PAERTQHRRDLA) shows a compositional bias: basic and acidic residues.

Belongs to the universal ribosomal protein uL29 family.

This Myxococcus xanthus (strain DK1622) protein is Large ribosomal subunit protein uL29.